Here is a 97-residue protein sequence, read N- to C-terminus: Aspartyl/glutamyl-tRNA(Asn/Gln) amidotransferase subunit C (97 aa).

The tract at residues 58 to 78 (LPQGRLRKDTPRDPLDRENAL) is disordered. Residues 63–77 (LRKDTPRDPLDRENA) show a composition bias toward basic and acidic residues.

Belongs to the GatC family. In terms of assembly, heterotrimer of A, B and C subunits.

The enzyme catalyses L-glutamyl-tRNA(Gln) + L-glutamine + ATP + H2O = L-glutaminyl-tRNA(Gln) + L-glutamate + ADP + phosphate + H(+). It carries out the reaction L-aspartyl-tRNA(Asn) + L-glutamine + ATP + H2O = L-asparaginyl-tRNA(Asn) + L-glutamate + ADP + phosphate + 2 H(+). Its function is as follows. Allows the formation of correctly charged Asn-tRNA(Asn) or Gln-tRNA(Gln) through the transamidation of misacylated Asp-tRNA(Asn) or Glu-tRNA(Gln) in organisms which lack either or both of asparaginyl-tRNA or glutaminyl-tRNA synthetases. The reaction takes place in the presence of glutamine and ATP through an activated phospho-Asp-tRNA(Asn) or phospho-Glu-tRNA(Gln). The sequence is that of Aspartyl/glutamyl-tRNA(Asn/Gln) amidotransferase subunit C from Saccharolobus islandicus (strain Y.N.15.51 / Yellowstone #2) (Sulfolobus islandicus).